Consider the following 229-residue polypeptide: uncharacterized protein (229 aa).

This sequence to M.pneumoniae MPN_376 central region.

This is an uncharacterized protein from Mycoplasma pneumoniae (strain ATCC 29342 / M129 / Subtype 1) (Mycoplasmoides pneumoniae).